The primary structure comprises 210 residues: Endonuclease III (210 aa).

A HhH domain is found at 108–127 (RIELESLPGVGRKTANIILN). [4Fe-4S] cluster contacts are provided by Cys187, Cys194, Cys197, and Cys203.

This sequence belongs to the Nth/MutY family. The cofactor is [4Fe-4S] cluster.

It catalyses the reaction 2'-deoxyribonucleotide-(2'-deoxyribose 5'-phosphate)-2'-deoxyribonucleotide-DNA = a 3'-end 2'-deoxyribonucleotide-(2,3-dehydro-2,3-deoxyribose 5'-phosphate)-DNA + a 5'-end 5'-phospho-2'-deoxyribonucleoside-DNA + H(+). Functionally, DNA repair enzyme that has both DNA N-glycosylase activity and AP-lyase activity. The DNA N-glycosylase activity releases various damaged pyrimidines from DNA by cleaving the N-glycosidic bond, leaving an AP (apurinic/apyrimidinic) site. The AP-lyase activity cleaves the phosphodiester bond 3' to the AP site by a beta-elimination, leaving a 3'-terminal unsaturated sugar and a product with a terminal 5'-phosphate. The protein is Endonuclease III of Buchnera aphidicola subsp. Acyrthosiphon pisum (strain APS) (Acyrthosiphon pisum symbiotic bacterium).